We begin with the raw amino-acid sequence, 287 residues long: Putative sugar uptake protein LJ_0170 (287 aa).

10 consecutive transmembrane segments (helical) span residues valine 4–valine 23, valine 28–methionine 50, tryptophan 56–isoleucine 78, isoleucine 91–phenylalanine 108, leucine 118–threonine 137, valine 150–isoleucine 169, serine 179–valine 198, valine 211–serine 230, phenylalanine 240–histidine 259, and glycine 266–threonine 285.

Belongs to the GRP transporter (TC 2.A.7.5) family.

Its subcellular location is the cell membrane. This Lactobacillus johnsonii (strain CNCM I-12250 / La1 / NCC 533) protein is Putative sugar uptake protein LJ_0170.